A 753-amino-acid chain; its full sequence is MTVINHTLGFPRVGLRRELKKAQESYWAGQSTREDLLAVGRELRARHWDQQKQAGIDLLPVGDFAWYDHVLTTSLLLGNVPARHQNKDGSVDIDTLFRLGRGRAPTGEPAAAAEMTKWFNTNYHYMVPEFVKGQQFKLTWTQLLDEVDEALALGHNIKPVLLGPVTYLWLGKVKGEQFDRLSLLNDILPVYQQVLAELAKRGVEWVQIDEPALVLELPQEWLDAFKPAYDALTGQTKLLLTTYFEGVTPNLDTITALPVQGLHVDLVHGKDEVAELNKRLPSDWLLSAGLVNGRNVWRADLTEKYAQIKDIVGKRDVWVASSCSLLHSPIDLSVETRLDAEVKSWFAFALQKCEELALLRDALNSGDTAKLVEWSAPIQARRHSTRVHNAAVEKRLAAITAKDSQRENAYEVRAEAQRARFNLPAWPTTTIGSFPQTTEIRGLRLDFKKGNLDANNYRTGIAEHIKQAIIEQERLGLDVLVHGEAERNDMVEYFGEHLDGFVFTQNGWVQSYGSRCVKPPVVIGDVSRPEAITVEWAKYAQSLTDKPVKGMLTGPVTILCWSFPREDVTRETIAKQIALALRDEVADLEAAGIGIIQIDEPALREGLPLRRSDWDAYLQWGVEAFRINAAVAKNDTQIHTHMCYCEFNDIMDSIAALDADVITIETSRSDMELLESFEEFDYPNEIGPGVYDIHSPNVPSVEWIEALLAKAAQRIPAERLWVNPDCGLKTRGWPETRAALANMVKAAQNLRQG.

5-methyltetrahydropteroyltri-L-glutamate contacts are provided by residues 17-20 and Lys-117; that span reads RELK. L-homocysteine-binding positions include 431 to 433 and Glu-484; that span reads IGS. Residues 431-433 and Glu-484 each bind L-methionine; that span reads IGS. 5-methyltetrahydropteroyltri-L-glutamate is bound by residues 515–516 and Trp-561; that span reads RC. L-homocysteine is bound at residue Asp-599. Residue Asp-599 coordinates L-methionine. Glu-605 contributes to the 5-methyltetrahydropteroyltri-L-glutamate binding site. The Zn(2+) site is built by His-641, Cys-643, and Glu-665. His-694 functions as the Proton donor in the catalytic mechanism. Residue Cys-726 participates in Zn(2+) binding.

The protein belongs to the vitamin-B12 independent methionine synthase family. Zn(2+) is required as a cofactor.

The catalysed reaction is 5-methyltetrahydropteroyltri-L-glutamate + L-homocysteine = tetrahydropteroyltri-L-glutamate + L-methionine. Its pathway is amino-acid biosynthesis; L-methionine biosynthesis via de novo pathway; L-methionine from L-homocysteine (MetE route): step 1/1. Catalyzes the transfer of a methyl group from 5-methyltetrahydrofolate to homocysteine resulting in methionine formation. The sequence is that of 5-methyltetrahydropteroyltriglutamate--homocysteine methyltransferase from Enterobacter sp. (strain 638).